We begin with the raw amino-acid sequence, 156 residues long: Putative NrdI-like protein (156 aa).

This sequence belongs to the NrdI family.

The protein is Putative NrdI-like protein of Streptococcus pneumoniae serotype 4 (strain ATCC BAA-334 / TIGR4).